A 118-amino-acid chain; its full sequence is Class I hydrophobin 1 (118 aa).

The N-terminal stretch at 1-20 is a signal peptide; the sequence is MFARLSTALLAFTLATAVVA. Disulfide bonds link cysteine 34–cysteine 97, cysteine 41–cysteine 91, cysteine 42–cysteine 77, and cysteine 98–cysteine 111. An N-linked (GlcNAc...) asparagine glycan is attached at asparagine 54. An N-linked (GlcNAc...) asparagine glycan is attached at asparagine 115.

It belongs to the fungal hydrophobin family. In terms of assembly, self-assembles to form functional amyloid fibrils called rodlets. Self-assembly into fibrillar rodlets occurs spontaneously at hydrophobic:hydrophilic interfaces and the rodlets further associate laterally to form amphipathic monolayers.

It is found in the secreted. It localises to the cell wall. In terms of biological role, aerial growth, conidiation, and dispersal of filamentous fungi in the environment rely upon a capability of their secreting small amphipathic proteins called hydrophobins (HPBs) with low sequence identity. Class I can self-assemble into an outermost layer of rodlet bundles on aerial cell surfaces, conferring cellular hydrophobicity that supports fungal growth, development and dispersal; whereas Class II form highly ordered films at water-air interfaces through intermolecular interactions but contribute nothing to the rodlet structure. This is Class I hydrophobin 1 from Coprinopsis cinerea (strain Okayama-7 / 130 / ATCC MYA-4618 / FGSC 9003) (Inky cap fungus).